Consider the following 729-residue polypeptide: Denticleless protein homolog (729 aa).

N-acetylmethionine is present on M1. 3 WD repeats span residues G47 to T89, A96 to T135, and G138 to F178. The DDB1-binding motif signature appears at W168 to R171. The segment covering H189–S198 has biased composition (polar residues). The disordered stretch occupies residues H189 to A212. Phosphothreonine is present on T196. A Nuclear localization signal motif is present at residues P197 to K203. WD repeat units lie at residues D214–R253, T269–V308, G313–T354, and G358–P398. The DDB1-binding motif motif lies at W243 to R246. Residues S409 and S425 each carry the phosphoserine modification. 2 disordered regions span residues K416–S445 and P460–K491. Residues S427–S445 are compositionally biased toward low complexity. A compositionally biased stretch (polar residues) spans P460–T475. T463 carries the phosphothreonine; by CDK1 and CDK2 modification. Positions R476–K491 are enriched in low complexity. S484, S489, S494, and S511 each carry phosphoserine. The tract at residues V504–S546 is disordered. A Phosphothreonine modification is found at T515. The residue at position 556 (S556) is a Phosphoserine. Polar residues predominate over residues V596–S607. Positions V596–M705 are disordered. Composition is skewed to low complexity over residues E630–G645 and S674–R688. 2 positions are modified to phosphoserine: S675 and S678. Phosphothreonine occurs at positions 683 and 701.

The protein belongs to the WD repeat cdt2 family. As to quaternary structure, component of the DCX(DTL) E3 ubiquitin ligase complex (also called CRL4(CDT2)), at least composed of CUL4 (CUL4A or CUL4B), DDB1, DTL/CDT2 and RBX1. Interacts with CDKN1A and DDB1. Interacts with FBXO11; SCF(FBXWO11) controls DTL stability but DCX(DTL) does not control FBXO11 stability. Interacts with CRY1. Ubiquitinated by the anaphase promoting complex/cyclosome (APC/C). Autoubiquitinated through 'Lys-48'-polyubiquitin chains in a PCNA-independent reaction, allowing proteasomal turnover. Polyubiquitinated by SCF(FBXO11) when not phosphorylated, leading to its degradation. A tight regulation of the polyubiquitination by SCF(FBXO11) is involved in the control of different processes such as TGF-beta signaling, cell cycle progression and exit. In terms of processing, phosphorylated at Thr-463 by CDK1/Cyclin B and CDK2/Cycnlin A but not by CDK2/Cyclin E, MAPK1 or PLK1. Phosphorylation at Thr-463 inhibits the interaction with FBXO11 and decreases upon cell cycle exit induced by TGF-beta or serum starvation.

Its subcellular location is the nucleus. The protein localises to the nucleus membrane. The protein resides in the cytoplasm. It is found in the cytoskeleton. It localises to the microtubule organizing center. Its subcellular location is the centrosome. The protein localises to the chromosome. The protein operates within protein modification; protein ubiquitination. In terms of biological role, substrate-specific adapter of a DCX (DDB1-CUL4-X-box) E3 ubiquitin-protein ligase complex required for cell cycle control, DNA damage response and translesion DNA synthesis. The DCX(DTL) complex, also named CRL4(CDT2) complex, mediates the polyubiquitination and subsequent degradation of CDT1, CDKN1A/p21(CIP1), FBH1, KMT5A and SDE2. CDT1 degradation in response to DNA damage is necessary to ensure proper cell cycle regulation of DNA replication. CDKN1A/p21(CIP1) degradation during S phase or following UV irradiation is essential to control replication licensing. KMT5A degradation is also important for a proper regulation of mechanisms such as TGF-beta signaling, cell cycle progression, DNA repair and cell migration. Most substrates require their interaction with PCNA for their polyubiquitination: substrates interact with PCNA via their PIP-box, and those containing the 'K+4' motif in the PIP box, recruit the DCX(DTL) complex, leading to their degradation. In undamaged proliferating cells, the DCX(DTL) complex also promotes the 'Lys-164' monoubiquitination of PCNA, thereby being involved in PCNA-dependent translesion DNA synthesis. The DDB1-CUL4A-DTL E3 ligase complex regulates the circadian clock function by mediating the ubiquitination and degradation of CRY1. This is Denticleless protein homolog (Dtl) from Mus musculus (Mouse).